The following is a 595-amino-acid chain: Zinc finger protein 467 (595 aa).

Positions 1-67 are disordered; sequence MRETLEALSS…EEGAHTEQAE (67 aa). Residue Lys-97 forms a Glycyl lysine isopeptide (Lys-Gly) (interchain with G-Cter in SUMO2) linkage. 6 consecutive C2H2-type zinc fingers follow at residues 160–182, 188–210, 216–238, 244–266, 272–294, and 300–322; these read YGCGECERRFRDQLTLRLHQRLH, CACPDCGRSFTQRAHMLLHQRSH, FPCSECDKRFSKKAHLTRHLRTH, YPCAECGKRFSQKIHLGSHQKTH, FPCTECEKRFRKKTHLIRHQRIH, and YQCAQCARSFTHKQHLVRHQRVH. A disordered region spans residues 313-350; that stretch reads QHLVRHQRVHQTAGPARPSPDSSASPHSTAPSPTPSFP. Low complexity predominate over residues 325 to 343; sequence AGPARPSPDSSASPHSTAP. C2H2-type zinc fingers lie at residues 355-377, 431-453, 459-481, 487-509, 515-537, and 543-565; these read FACSDCGLSFGWKKNLATHQCLH, FFCPDCGRGFSHGQHLARHPRVH, FACTQCDRRFGSRPNLVAHSRAH, FACAQCGRRFSRKSHLGRHQAVH, HACAVCARSFSSKTNLVRHQAIH, and FSCPQCGKSFSRKTHLVRHQLIH. Lys-368 is covalently cross-linked (Glycyl lysine isopeptide (Lys-Gly) (interchain with G-Cter in SUMO2)).

This sequence belongs to the krueppel C2H2-type zinc-finger protein family. In terms of assembly, interacts with STAT3. Enhances STAT3 activity by keeping it in the nucleus.

Its subcellular location is the nucleus. Its function is as follows. Transcription factor that promotes adipocyte differentiation and suppresses osteoblast differentiation in the bone marrow. Enhances the osteoclast-supporting ability of stromal cells. Binds with STAT3 the consensus sequence 5'-CTTCTGGGAAGA-3' of the acute phase response element (APRE). Transactivates several promoters including FOS, OSM and PPARG. Recruits a histone deacetylase complex. The chain is Zinc finger protein 467 (ZNF467) from Homo sapiens (Human).